The sequence spans 276 residues: Pantothenate synthetase (276 aa).

An ATP-binding site is contributed by 27–34 (MGALHRGH). His34 serves as the catalytic Proton donor. Gln58 lines the (R)-pantoate pocket. Position 58 (Gln58) interacts with beta-alanine. 147 to 150 (GKKD) contacts ATP. Gln153 is a binding site for (R)-pantoate. Residues Ala176 and 184 to 187 (LSSR) each bind ATP.

This sequence belongs to the pantothenate synthetase family. Homodimer.

Its subcellular location is the cytoplasm. It catalyses the reaction (R)-pantoate + beta-alanine + ATP = (R)-pantothenate + AMP + diphosphate + H(+). The protein operates within cofactor biosynthesis; (R)-pantothenate biosynthesis; (R)-pantothenate from (R)-pantoate and beta-alanine: step 1/1. Its function is as follows. Catalyzes the condensation of pantoate with beta-alanine in an ATP-dependent reaction via a pantoyl-adenylate intermediate. The polypeptide is Pantothenate synthetase (Helicobacter pylori (strain P12)).